The chain runs to 579 residues: Probable pectinesterase/pectinesterase inhibitor 7 (579 aa).

The N-terminal stretch at 1 to 20 (MESPIFILITLSFFLQSVLA) is a signal peptide. The pectinesterase inhibitor 7 stretch occupies residues 22–185 (SQTLSNSSTI…TKLLGVSLAL (164 aa)). N-linked (GlcNAc...) asparagine glycosylation is found at Asn27, Asn115, Asn174, Asn274, Asn277, Asn287, Asn326, and Asn333. A pectinesterase 7 region spans residues 265-564 (VTVSQDGTGN…TVTGLFIEAD (300 aa)). Thr342 is a binding site for substrate. Asn359 is a glycosylation site (N-linked (GlcNAc...) asparagine). Gln372 is a binding site for substrate. Asp395 (proton donor; for pectinesterase activity) is an active-site residue. The cysteines at positions 409 and 429 are disulfide-linked. Asp416 acts as the Nucleophile; for pectinesterase activity in catalysis. N-linked (GlcNAc...) asparagine glycans are attached at residues Asn462 and Asn475. Substrate contacts are provided by Arg484 and Trp486. Residues Asn526, Asn533, Asn547, and Asn553 are each glycosylated (N-linked (GlcNAc...) asparagine).

The protein in the N-terminal section; belongs to the PMEI family. In the C-terminal section; belongs to the pectinesterase family. In terms of tissue distribution, expressed in siliques.

It localises to the secreted. Its subcellular location is the cell wall. It carries out the reaction [(1-&gt;4)-alpha-D-galacturonosyl methyl ester](n) + n H2O = [(1-&gt;4)-alpha-D-galacturonosyl](n) + n methanol + n H(+). The protein operates within glycan metabolism; pectin degradation; 2-dehydro-3-deoxy-D-gluconate from pectin: step 1/5. Acts in the modification of cell walls via demethylesterification of cell wall pectin. The polypeptide is Probable pectinesterase/pectinesterase inhibitor 7 (PME7) (Arabidopsis thaliana (Mouse-ear cress)).